The primary structure comprises 702 residues: Elongation factor G (702 aa).

In terms of domain architecture, tr-type G spans 8–290 (ERYRNIGISA…GVVEYLPSPV (283 aa)). GTP contacts are provided by residues 17 to 24 (AHIDAGKT), 88 to 92 (DTPGH), and 142 to 145 (NKMD).

Belongs to the TRAFAC class translation factor GTPase superfamily. Classic translation factor GTPase family. EF-G/EF-2 subfamily.

It is found in the cytoplasm. In terms of biological role, catalyzes the GTP-dependent ribosomal translocation step during translation elongation. During this step, the ribosome changes from the pre-translocational (PRE) to the post-translocational (POST) state as the newly formed A-site-bound peptidyl-tRNA and P-site-bound deacylated tRNA move to the P and E sites, respectively. Catalyzes the coordinated movement of the two tRNA molecules, the mRNA and conformational changes in the ribosome. The polypeptide is Elongation factor G (Janthinobacterium sp. (strain Marseille) (Minibacterium massiliensis)).